The following is a 146-amino-acid chain: UPF0178 protein LMOf2365_1475 (146 aa).

Belongs to the UPF0178 family.

This chain is UPF0178 protein LMOf2365_1475, found in Listeria monocytogenes serotype 4b (strain F2365).